The chain runs to 139 residues: Nucleoside diphosphate kinase (139 aa).

Lys10, Phe58, Arg86, Thr92, Arg103, and Asn113 together coordinate ATP. The Pros-phosphohistidine intermediate role is filled by His116.

It belongs to the NDK family. As to quaternary structure, homotetramer. It depends on Mg(2+) as a cofactor.

The protein localises to the cytoplasm. The enzyme catalyses a 2'-deoxyribonucleoside 5'-diphosphate + ATP = a 2'-deoxyribonucleoside 5'-triphosphate + ADP. The catalysed reaction is a ribonucleoside 5'-diphosphate + ATP = a ribonucleoside 5'-triphosphate + ADP. Functionally, major role in the synthesis of nucleoside triphosphates other than ATP. The ATP gamma phosphate is transferred to the NDP beta phosphate via a ping-pong mechanism, using a phosphorylated active-site intermediate. The sequence is that of Nucleoside diphosphate kinase from Desulfovibrio desulfuricans (strain ATCC 27774 / DSM 6949 / MB).